The following is a 209-amino-acid chain: Large ribosomal subunit protein uL3 (209 aa).

This sequence belongs to the universal ribosomal protein uL3 family. In terms of assembly, part of the 50S ribosomal subunit. Forms a cluster with proteins L14 and L19.

Functionally, one of the primary rRNA binding proteins, it binds directly near the 3'-end of the 23S rRNA, where it nucleates assembly of the 50S subunit. This is Large ribosomal subunit protein uL3 from Clostridium tetani (strain Massachusetts / E88).